The chain runs to 298 residues: Lipoyl synthase (298 aa).

Positions 40, 45, 51, 67, 71, 74, and 280 each coordinate [4Fe-4S] cluster. Residues 53-269 form the Radical SAM core domain; the sequence is AVRKTATFMI…KEIALSKGFS (217 aa).

Belongs to the radical SAM superfamily. Lipoyl synthase family. The cofactor is [4Fe-4S] cluster.

It is found in the cytoplasm. The enzyme catalyses [[Fe-S] cluster scaffold protein carrying a second [4Fe-4S](2+) cluster] + N(6)-octanoyl-L-lysyl-[protein] + 2 oxidized [2Fe-2S]-[ferredoxin] + 2 S-adenosyl-L-methionine + 4 H(+) = [[Fe-S] cluster scaffold protein] + N(6)-[(R)-dihydrolipoyl]-L-lysyl-[protein] + 4 Fe(3+) + 2 hydrogen sulfide + 2 5'-deoxyadenosine + 2 L-methionine + 2 reduced [2Fe-2S]-[ferredoxin]. It functions in the pathway protein modification; protein lipoylation via endogenous pathway; protein N(6)-(lipoyl)lysine from octanoyl-[acyl-carrier-protein]. Functionally, catalyzes the radical-mediated insertion of two sulfur atoms into the C-6 and C-8 positions of the octanoyl moiety bound to the lipoyl domains of lipoate-dependent enzymes, thereby converting the octanoylated domains into lipoylated derivatives. The protein is Lipoyl synthase of Bacillus thuringiensis (strain Al Hakam).